A 1172-amino-acid polypeptide reads, in one-letter code: DNA-directed RNA polymerase subunit beta (1172 aa).

The protein belongs to the RNA polymerase beta chain family. As to quaternary structure, the RNAP catalytic core consists of 2 alpha, 1 beta, 1 beta' and 1 omega subunit. When a sigma factor is associated with the core the holoenzyme is formed, which can initiate transcription.

It carries out the reaction RNA(n) + a ribonucleoside 5'-triphosphate = RNA(n+1) + diphosphate. Functionally, DNA-dependent RNA polymerase catalyzes the transcription of DNA into RNA using the four ribonucleoside triphosphates as substrates. The protein is DNA-directed RNA polymerase subunit beta of Thermosipho melanesiensis (strain DSM 12029 / CIP 104789 / BI429).